Consider the following 327-residue polypeptide: Methionyl-tRNA formyltransferase (327 aa).

122–125 (SLLP) contacts (6S)-5,6,7,8-tetrahydrofolate.

This sequence belongs to the Fmt family.

The catalysed reaction is L-methionyl-tRNA(fMet) + (6R)-10-formyltetrahydrofolate = N-formyl-L-methionyl-tRNA(fMet) + (6S)-5,6,7,8-tetrahydrofolate + H(+). Functionally, attaches a formyl group to the free amino group of methionyl-tRNA(fMet). The formyl group appears to play a dual role in the initiator identity of N-formylmethionyl-tRNA by promoting its recognition by IF2 and preventing the misappropriation of this tRNA by the elongation apparatus. This Ralstonia nicotianae (strain ATCC BAA-1114 / GMI1000) (Ralstonia solanacearum) protein is Methionyl-tRNA formyltransferase.